Reading from the N-terminus, the 151-residue chain is Cytochrome c-type biogenesis protein CcmE (151 aa).

The Cytoplasmic segment spans residues M1–R9. The helical; Signal-anchor for type II membrane protein transmembrane segment at I10–A30 threads the bilayer. The Periplasmic segment spans residues M31–G151. 2 residues coordinate heme: H123 and Y127.

This sequence belongs to the CcmE/CycJ family.

Its subcellular location is the cell inner membrane. In terms of biological role, heme chaperone required for the biogenesis of c-type cytochromes. Transiently binds heme delivered by CcmC and transfers the heme to apo-cytochromes in a process facilitated by CcmF and CcmH. In Cereibacter sphaeroides (strain ATCC 17025 / ATH 2.4.3) (Rhodobacter sphaeroides), this protein is Cytochrome c-type biogenesis protein CcmE.